Consider the following 262-residue polypeptide: Acyl-[acyl-carrier-protein]--UDP-N-acetylglucosamine O-acyltransferase (262 aa).

It belongs to the transferase hexapeptide repeat family. LpxA subfamily. As to quaternary structure, homotrimer.

It is found in the cytoplasm. It catalyses the reaction a (3R)-hydroxyacyl-[ACP] + UDP-N-acetyl-alpha-D-glucosamine = a UDP-3-O-[(3R)-3-hydroxyacyl]-N-acetyl-alpha-D-glucosamine + holo-[ACP]. It functions in the pathway glycolipid biosynthesis; lipid IV(A) biosynthesis; lipid IV(A) from (3R)-3-hydroxytetradecanoyl-[acyl-carrier-protein] and UDP-N-acetyl-alpha-D-glucosamine: step 1/6. In terms of biological role, involved in the biosynthesis of lipid A, a phosphorylated glycolipid that anchors the lipopolysaccharide to the outer membrane of the cell. This is Acyl-[acyl-carrier-protein]--UDP-N-acetylglucosamine O-acyltransferase from Wigglesworthia glossinidia brevipalpis.